Consider the following 215-residue polypeptide: Large ribosomal subunit protein uL4 (215 aa).

The segment at 51-88 is disordered; sequence KGMGEVSGTTKKPYRQKGTGNARQGSLRAPQFRTGGAV.

This sequence belongs to the universal ribosomal protein uL4 family. Part of the 50S ribosomal subunit.

Its function is as follows. One of the primary rRNA binding proteins, this protein initially binds near the 5'-end of the 23S rRNA. It is important during the early stages of 50S assembly. It makes multiple contacts with different domains of the 23S rRNA in the assembled 50S subunit and ribosome. In terms of biological role, forms part of the polypeptide exit tunnel. In Granulibacter bethesdensis (strain ATCC BAA-1260 / CGDNIH1), this protein is Large ribosomal subunit protein uL4.